Reading from the N-terminus, the 359-residue chain is Histidinol-phosphate aminotransferase (359 aa).

Lys-217 carries the post-translational modification N6-(pyridoxal phosphate)lysine.

This sequence belongs to the class-II pyridoxal-phosphate-dependent aminotransferase family. Histidinol-phosphate aminotransferase subfamily. In terms of assembly, homodimer. It depends on pyridoxal 5'-phosphate as a cofactor.

It carries out the reaction L-histidinol phosphate + 2-oxoglutarate = 3-(imidazol-4-yl)-2-oxopropyl phosphate + L-glutamate. It participates in amino-acid biosynthesis; L-histidine biosynthesis; L-histidine from 5-phospho-alpha-D-ribose 1-diphosphate: step 7/9. The protein is Histidinol-phosphate aminotransferase of Salmonella choleraesuis (strain SC-B67).